The following is a 137-amino-acid chain: MEKTFAIIKPDAFAAGNAGKILARIYQEGFTVIGLKKLCMSQREAEGFYAVHNKKPFFAELTKFMSSGPCIVMVLEAEGCIGKWRDLMGATNPADAKPGSLRREFGTIVGENATHGSDAPETAAVELEYFFSGLELL.

Positions 9, 57, 85, 91, 102, and 112 each coordinate ATP. His-115 serves as the catalytic Pros-phosphohistidine intermediate.

This sequence belongs to the NDK family. In terms of assembly, homotetramer. Mg(2+) is required as a cofactor.

The protein localises to the cytoplasm. It catalyses the reaction a 2'-deoxyribonucleoside 5'-diphosphate + ATP = a 2'-deoxyribonucleoside 5'-triphosphate + ADP. The enzyme catalyses a ribonucleoside 5'-diphosphate + ATP = a ribonucleoside 5'-triphosphate + ADP. Its function is as follows. Major role in the synthesis of nucleoside triphosphates other than ATP. The ATP gamma phosphate is transferred to the NDP beta phosphate via a ping-pong mechanism, using a phosphorylated active-site intermediate. This Desulfotalea psychrophila (strain LSv54 / DSM 12343) protein is Nucleoside diphosphate kinase.